A 496-amino-acid polypeptide reads, in one-letter code: Glutamate--tRNA ligase (496 aa).

The 'HIGH' region signature appears at 12 to 22 (PSPTGTPHVGL). Residues 256–260 (KLSKR) carry the 'KMSKS' region motif. Lys259 contacts ATP.

This sequence belongs to the class-I aminoacyl-tRNA synthetase family. Glutamate--tRNA ligase type 1 subfamily. As to quaternary structure, monomer.

The protein localises to the cytoplasm. It carries out the reaction tRNA(Glu) + L-glutamate + ATP = L-glutamyl-tRNA(Glu) + AMP + diphosphate. Functionally, catalyzes the attachment of glutamate to tRNA(Glu) in a two-step reaction: glutamate is first activated by ATP to form Glu-AMP and then transferred to the acceptor end of tRNA(Glu). In Mycobacteroides abscessus (strain ATCC 19977 / DSM 44196 / CCUG 20993 / CIP 104536 / JCM 13569 / NCTC 13031 / TMC 1543 / L948) (Mycobacterium abscessus), this protein is Glutamate--tRNA ligase.